A 395-amino-acid chain; its full sequence is Tryptophan--tRNA ligase, cytoplasmic (395 aa).

The 'HIGH' region motif lies at 91–100 (PSSDSMHLGH). The 'KMSKS' region signature appears at 275–279 (KMSAS). 2 positions are modified to phosphothreonine: T288 and T290.

The protein belongs to the class-I aminoacyl-tRNA synthetase family.

The protein localises to the cytoplasm. It carries out the reaction tRNA(Trp) + L-tryptophan + ATP = L-tryptophyl-tRNA(Trp) + AMP + diphosphate + H(+). The polypeptide is Tryptophan--tRNA ligase, cytoplasmic (wrs1) (Schizosaccharomyces pombe (strain 972 / ATCC 24843) (Fission yeast)).